The sequence spans 106 residues: Nucleoid-associated protein RPD_0086 (106 aa).

Belongs to the YbaB/EbfC family. In terms of assembly, homodimer.

It localises to the cytoplasm. Its subcellular location is the nucleoid. In terms of biological role, binds to DNA and alters its conformation. May be involved in regulation of gene expression, nucleoid organization and DNA protection. This Rhodopseudomonas palustris (strain BisB5) protein is Nucleoid-associated protein RPD_0086.